Reading from the N-terminus, the 320-residue chain is 1-aminocyclopropane-1-carboxylate oxidase 3 (320 aa).

The region spanning 153–253 (PNFGTKVSNY…RMSLASFYNP (101 aa)) is the Fe2OG dioxygenase domain. The Fe cation site is built by His177, Asp179, and His234.

This sequence belongs to the iron/ascorbate-dependent oxidoreductase family. The cofactor is Fe cation.

The enzyme catalyses 1-aminocyclopropane-1-carboxylate + L-ascorbate + O2 = ethene + L-dehydroascorbate + hydrogen cyanide + CO2 + 2 H2O. The protein operates within alkene biosynthesis; ethylene biosynthesis via S-adenosyl-L-methionine; ethylene from S-adenosyl-L-methionine: step 2/2. This chain is 1-aminocyclopropane-1-carboxylate oxidase 3 (ACO3), found in Petunia hybrida (Petunia).